A 377-amino-acid chain; its full sequence is cAMP-dependent protein kinase type II regulatory subunit (377 aa).

The segment covering 48-69 has biased composition (polar residues); the sequence is ERPSVSHTDQSTDDQLSVNSQD. The segment at 48–78 is disordered; sequence ERPSVSHTDQSTDDQLSVNSQDADAEPPVMA. Phosphoserine occurs at positions 51, 58, 64, 67, and 84. Positions 81–85 match the Pseudophosphorylation motif motif; the sequence is RRKSV. Phosphotyrosine is present on Y90. 3',5'-cyclic AMP is bound by residues 124-239, E189, R198, 242-362, E311, and R320; these read LFRS…LLNS and MLKA…YESQ.

The protein belongs to the cAMP-dependent kinase regulatory chain family. In terms of assembly, tetramer, composed of 2 regulatory (R) and 2 catalytic (C) subunits. In the presence of cAMP it dissociates into 2 active monomeric C subunits and an R dimer. Interacts with Akap200. The pseudophosphorylation site binds to the substrate-binding region of the catalytic chain but is not phosphorylated. The physiological significance of phosphorylations by other kinases is unclear. In terms of tissue distribution, detected in follicle cells, germline-derived cells, germline line stem cells and outer rim of ring canals of nurse cells throughout oogenesis (at protein level).

It is found in the cytoplasm. The protein resides in the cell membrane. Regulatory subunit of the cAMP-dependent protein kinases involved in cAMP signaling in cells. Mediates membrane association by binding to anchoring proteins, such as Akap200. Might play an essential role in the regulation of neuronal activity in the brain. The protein is cAMP-dependent protein kinase type II regulatory subunit (Pka-R2) of Drosophila melanogaster (Fruit fly).